Reading from the N-terminus, the 86-residue chain is Cell division topological specificity factor (86 aa).

It belongs to the MinE family.

Its function is as follows. Prevents the cell division inhibition by proteins MinC and MinD at internal division sites while permitting inhibition at polar sites. This ensures cell division at the proper site by restricting the formation of a division septum at the midpoint of the long axis of the cell. The polypeptide is Cell division topological specificity factor (Bordetella petrii (strain ATCC BAA-461 / DSM 12804 / CCUG 43448)).